The following is a 147-amino-acid chain: Hemoglobin subunit beta (147 aa).

Residues 3 to 147 enclose the Globin domain; it reads EWTDKERSII…VVSALGKQYH (145 aa). Heme b is bound by residues H64 and H93.

This sequence belongs to the globin family. As to quaternary structure, heterotetramer of two alpha chains and two beta chains. As to expression, red blood cells.

Its function is as follows. Involved in oxygen transport from gills to the various peripheral tissues. The polypeptide is Hemoglobin subunit beta (hbb) (Trematomus hansoni (Striped rockcod)).